Reading from the N-terminus, the 180-residue chain is MAAAEEEDGGPEGPNRERGGAGATFECNICLETAREAVVSVCGHLYCWPCLHQWLETRPERQECPVCKAGISREKVVPLYGRGSQKPQDPRLKTPPRPQGQRPAPESRGGFQPFGDTGGFHFSFGVGAFPFGFFTTVFNAHEPFRRGTGVDLGQGHPASSWQDSLFLFLAIFFFFWLLSI.

Residue Ala-2 is modified to N-acetylalanine. The RING-type zinc-finger motif lies at 27–68 (CNICLETAREAVVSVCGHLYCWPCLHQWLETRPERQECPVCK). The disordered stretch occupies residues 79-110 (LYGRGSQKPQDPRLKTPPRPQGQRPAPESRGG). Ser-84 carries the post-translational modification Phosphoserine. Position 94 is a phosphothreonine (Thr-94). Ser-107 is subject to Phosphoserine. 2 helical membrane passes run 118–138 (GGFH…TTVF) and 160–180 (SWQD…LLSI).

It belongs to the RNF5 family. Interacts with PXN. Interacts with Salmonella typhimurium sopA. Interacts with JKAMP. Interacts with STING1; the interaction of endogenous proteins is dependent on viral infection. In terms of tissue distribution, widely expressed.

It is found in the cell membrane. Its subcellular location is the mitochondrion membrane. The protein localises to the endoplasmic reticulum membrane. The catalysed reaction is S-ubiquitinyl-[E2 ubiquitin-conjugating enzyme]-L-cysteine + [acceptor protein]-L-lysine = [E2 ubiquitin-conjugating enzyme]-L-cysteine + N(6)-ubiquitinyl-[acceptor protein]-L-lysine.. Its pathway is protein modification; protein ubiquitination. In terms of biological role, membrane-bound E3 ubiquitin-protein ligase that mediates ubiquitination of target proteins. May function together with E2 ubiquitin-conjugating enzymes UBE2D1/UBCH5A and UBE2D2/UBC4. Mediates ubiquitination of PXN/paxillin,thereby regulating cell motility and localization of PXN/paxillin. Catalyzes ubiquitination of Salmonella type III secreted protein sopA. Mediates the 'Lys-63'-linked polyubiquitination of JKAMP thereby regulating JKAMP function by decreasing its association with components of the proteasome and ERAD; the ubiquitination appears to involve E2 ubiquitin-conjugating enzyme UBE2N. Mediates the 'Lys-48'-linked polyubiquitination of STING1 at 'Lys-150' leading to its proteasomal degradation; the ubiquitination occurs in mitochondria after viral transfection and regulates antiviral responses. Catalyzes ubiquitination and subsequent degradation of ATG4B, thereby inhibiting autophagy. This chain is E3 ubiquitin-protein ligase RNF5, found in Homo sapiens (Human).